A 197-amino-acid polypeptide reads, in one-letter code: Thymidylate kinase (197 aa).

7 to 14 (GIDGCGKS) contacts ATP.

Belongs to the thymidylate kinase family.

The enzyme catalyses dTMP + ATP = dTDP + ADP. In terms of biological role, phosphorylation of dTMP to form dTDP in both de novo and salvage pathways of dTTP synthesis. This chain is Thymidylate kinase, found in Fervidobacterium nodosum (strain ATCC 35602 / DSM 5306 / Rt17-B1).